We begin with the raw amino-acid sequence, 438 residues long: Methylenetetrahydrofolate--tRNA-(uracil-5-)-methyltransferase TrmFO 2 (438 aa).

Residue 9–14 (GAGLAG) coordinates FAD.

This sequence belongs to the MnmG family. TrmFO subfamily. FAD serves as cofactor.

It is found in the cytoplasm. The enzyme catalyses uridine(54) in tRNA + (6R)-5,10-methylene-5,6,7,8-tetrahydrofolate + NADH + H(+) = 5-methyluridine(54) in tRNA + (6S)-5,6,7,8-tetrahydrofolate + NAD(+). It carries out the reaction uridine(54) in tRNA + (6R)-5,10-methylene-5,6,7,8-tetrahydrofolate + NADPH + H(+) = 5-methyluridine(54) in tRNA + (6S)-5,6,7,8-tetrahydrofolate + NADP(+). Functionally, catalyzes the folate-dependent formation of 5-methyl-uridine at position 54 (M-5-U54) in all tRNAs. This chain is Methylenetetrahydrofolate--tRNA-(uracil-5-)-methyltransferase TrmFO 2, found in Mycoplasma mycoides subsp. mycoides SC (strain CCUG 32753 / NCTC 10114 / PG1).